Reading from the N-terminus, the 139-residue chain is Small ribosomal subunit protein uS12 (139 aa).

A 3-methylthioaspartic acid modification is found at aspartate 102.

Belongs to the universal ribosomal protein uS12 family. Part of the 30S ribosomal subunit. Contacts proteins S8 and S17. May interact with IF1 in the 30S initiation complex.

In terms of biological role, with S4 and S5 plays an important role in translational accuracy. Its function is as follows. Interacts with and stabilizes bases of the 16S rRNA that are involved in tRNA selection in the A site and with the mRNA backbone. Located at the interface of the 30S and 50S subunits, it traverses the body of the 30S subunit contacting proteins on the other side and probably holding the rRNA structure together. The combined cluster of proteins S8, S12 and S17 appears to hold together the shoulder and platform of the 30S subunit. In Bacillus pumilus (strain SAFR-032), this protein is Small ribosomal subunit protein uS12.